We begin with the raw amino-acid sequence, 372 residues long: Protein phosphatase Mn(2+)-dependent 1K (372 aa).

A mitochondrion-targeting transit peptide spans 1 to 29 (MLSAAFITLLRSGGNQVKKRVLLSSILLQ). Positions 46–61 (RCSRFDPDGSGQPATW) are critical for association with the BCKDH complex. The region spanning 94 to 346 (NVGCASLIGK…DNSTAVVVPF (253 aa)) is the PPM-type phosphatase domain. Residues Asp127 and Gly128 each contribute to the Mn(2+) site. Ser248 is modified (phosphoserine). Residues Asp298 and Asp337 each contribute to the Mn(2+) site.

Belongs to the PP2C family. Monomer. Interacts with E1 and E2 components of the branched-chain alpha-ketoacid dehydrogenase (BCKDH) complex; this interaction requires colocalization in mitochondria. Interacts with BCKDHA but not with BCKDHB of the E1 component. Interacts with the 24-meric E2 core composed of DBT monomers with a 24:1 stoichiometry; the N-terminal region (residues 49-61) of PPM1K and C-terminal linker of the lipoyl domain of DBT (residues 145-160) are critical for this interaction, whereas the lipoyl prosthetic group is dispensable. Competes with BCKDK for binding to the E2 core; this interaction is modulated by branched-chain alpha-keto acids. At steady state, BCKDH holoenzyme preferentially binds BCKDK and BCKDHA is phosphorylated. In response to high levels of branched-chain alpha-keto acids, the inhibitory BCKDK is replaced by activating PPM1K leading to BCKDHA dephosphorylation and BCAA degradation. Requires Mn(2+) as cofactor. In terms of tissue distribution, highly expressed in the heart, kidney, brain and liver and to a lesser extent in testis, lung, spleen and adipose tissue. Very low amount in muscle (at protein level). Also expressed in the thymus (at protein level) and the diaphragm. Significantly reduced in hypertrophied hearts.

It is found in the mitochondrion matrix. The catalysed reaction is O-phospho-L-seryl-[3-methyl-2-oxobutanoate dehydrogenase] + H2O = L-seryl-[3-methyl-2-oxobutanoate dehydrogenase] + phosphate. It catalyses the reaction O-phospho-L-seryl-[protein] + H2O = L-seryl-[protein] + phosphate. It functions in the pathway protein modification. Functionally, serine/threonine-protein phosphatase component of macronutrients metabolism. Forms a functional kinase and phosphatase pair with BCKDK, serving as a metabolic regulatory node that coordinates branched-chain amino acids (BCAAs) with glucose and lipid metabolism via two distinct phosphoprotein targets: mitochondrial BCKDHA subunit of the branched-chain alpha-ketoacid dehydrogenase (BCKDH) complex and cytosolic ACLY, a lipogenic enzyme of Krebs cycle. At high levels of branched-chain ketoacids, dephosphorylates and activates mitochondrial BCKDH complex, a multisubunit complex consisting of three multimeric components each involved in different steps of BCAA catabolism: E1 composed of BCKDHA and BCKDHB, E2 core composed of DBT monomers, and E3 composed of DLD monomers. Tightly associates with the E2 component of BCKDH complex and dephosphorylates BCKDHA on Ser-334. Regulates the reversible phosphorylation of ACLY in response to changes in cellular carbohydrate abundance such as occurs during fasting to feeding metabolic transition. At fasting state, appears to dephosphorylate ACLY on Ser-455 and inactivate it. Refeeding stimulates MLXIPL/ChREBP transcription factor, leading to increased BCKDK to PPM1K expression ratio, phosphorylation and activation of ACLY that ultimately results in the generation of malonyl-CoA and oxaloacetate immediate substrates of de novo lipogenesis and gluconeogenesis, respectively. Recognizes phosphosites having SxS or RxxS motifs and strictly depends on Mn(2+) ions for the phosphatase activity. Regulates Ca(2+)-induced opening of mitochondrial transition pore and apoptotic cell death. This is Protein phosphatase Mn(2+)-dependent 1K from Mus musculus (Mouse).